Reading from the N-terminus, the 352-residue chain is Histidine biosynthesis bifunctional protein HisB (352 aa).

The histidinol-phosphatase stretch occupies residues 1-164; that stretch reads MSQKILFIDR…EIENEILSSF (164 aa). Catalysis depends on Asp-9, which acts as the Nucleophile. The Mg(2+) site is built by Asp-9 and Asp-11. Residue Asp-11 is the Proton donor of the active site. 4 residues coordinate Zn(2+): Cys-93, His-95, Cys-101, and Cys-103. Residue Asp-130 participates in Mg(2+) binding. Residues 165-352 are imidazoleglycerol-phosphate dehydratase; the sequence is RSASYQRTTK…ENLASSKGVI (188 aa).

The protein in the N-terminal section; belongs to the histidinol-phosphatase family. It in the C-terminal section; belongs to the imidazoleglycerol-phosphate dehydratase family. Mg(2+) is required as a cofactor. It depends on Zn(2+) as a cofactor.

The protein localises to the cytoplasm. It carries out the reaction D-erythro-1-(imidazol-4-yl)glycerol 3-phosphate = 3-(imidazol-4-yl)-2-oxopropyl phosphate + H2O. It catalyses the reaction L-histidinol phosphate + H2O = L-histidinol + phosphate. Its pathway is amino-acid biosynthesis; L-histidine biosynthesis; L-histidine from 5-phospho-alpha-D-ribose 1-diphosphate: step 6/9. The protein operates within amino-acid biosynthesis; L-histidine biosynthesis; L-histidine from 5-phospho-alpha-D-ribose 1-diphosphate: step 8/9. This is Histidine biosynthesis bifunctional protein HisB from Campylobacter jejuni subsp. jejuni serotype O:23/36 (strain 81-176).